The chain runs to 671 residues: Alpha-1,4-glucan:maltose-1-phosphate maltosyltransferase (671 aa).

Alpha-maltose 1-phosphate contacts are provided by K252, Q312, and D347. D382 functions as the Nucleophile in the catalytic mechanism. N383 provides a ligand contact to alpha-maltose 1-phosphate. E411 functions as the Proton donor in the catalytic mechanism. Position 521–522 (521–522 (KY)) interacts with alpha-maltose 1-phosphate.

It belongs to the glycosyl hydrolase 13 family. GlgE subfamily. Homodimer.

The enzyme catalyses alpha-maltose 1-phosphate + [(1-&gt;4)-alpha-D-glucosyl](n) = [(1-&gt;4)-alpha-D-glucosyl](n+2) + phosphate. Functionally, maltosyltransferase that uses maltose 1-phosphate (M1P) as the sugar donor to elongate linear or branched alpha-(1-&gt;4)-glucans. Is involved in a branched alpha-glucan biosynthetic pathway from trehalose, together with TreS, Mak and GlgB. The protein is Alpha-1,4-glucan:maltose-1-phosphate maltosyltransferase of Corynebacterium pseudotuberculosis (strain 1002).